We begin with the raw amino-acid sequence, 79 residues long: Ketoisovalerate oxidoreductase subunit VorC (79 aa).

4Fe-4S ferredoxin-type domains are found at residues A4 to K33 and H40 to E70. [4Fe-4S] cluster-binding residues include C13, C16, C19, C23, C49, C52, C55, and C59.

As to quaternary structure, heterotrimer of the VorA, VorB and VorC subunits. It depends on [4Fe-4S] cluster as a cofactor.

It catalyses the reaction 3-methyl-2-oxobutanoate + 2 oxidized [2Fe-2S]-[ferredoxin] + CoA = 2-methylpropanoyl-CoA + 2 reduced [2Fe-2S]-[ferredoxin] + CO2 + H(+). This Methanothermobacter marburgensis (strain ATCC BAA-927 / DSM 2133 / JCM 14651 / NBRC 100331 / OCM 82 / Marburg) (Methanobacterium thermoautotrophicum) protein is Ketoisovalerate oxidoreductase subunit VorC (vorC).